The chain runs to 177 residues: Large ribosomal subunit protein uL6 (177 aa).

Belongs to the universal ribosomal protein uL6 family. Part of the 50S ribosomal subunit.

Its function is as follows. This protein binds to the 23S rRNA, and is important in its secondary structure. It is located near the subunit interface in the base of the L7/L12 stalk, and near the tRNA binding site of the peptidyltransferase center. This chain is Large ribosomal subunit protein uL6, found in Colwellia psychrerythraea (strain 34H / ATCC BAA-681) (Vibrio psychroerythus).